A 542-amino-acid polypeptide reads, in one-letter code: CTP synthase (542 aa).

The amidoligase domain stretch occupies residues 1 to 265; the sequence is MARYIFITGG…DSEVLCAFGI (265 aa). Residue Ser-13 coordinates CTP. Residue Ser-13 coordinates UTP. 14-19 contacts ATP; that stretch reads SLGKGI. Tyr-54 provides a ligand contact to L-glutamine. Position 71 (Asp-71) interacts with ATP. The Mg(2+) site is built by Asp-71 and Glu-139. CTP contacts are provided by residues 146 to 148, 186 to 191, and Lys-222; these read DIE and KTKPTQ. Residues 186 to 191 and Lys-222 contribute to the UTP site; that span reads KTKPTQ. The Glutamine amidotransferase type-1 domain occupies 291–541; the sequence is TIAVVGKYTG…IEATVEQSRL (251 aa). An L-glutamine-binding site is contributed by Ala-353. The Nucleophile; for glutamine hydrolysis role is filled by Cys-380. L-glutamine contacts are provided by residues 381–384, Glu-404, and Arg-469; that span reads FGMQ. Active-site residues include His-514 and Glu-516.

Belongs to the CTP synthase family. Homotetramer.

The catalysed reaction is UTP + L-glutamine + ATP + H2O = CTP + L-glutamate + ADP + phosphate + 2 H(+). It carries out the reaction L-glutamine + H2O = L-glutamate + NH4(+). It catalyses the reaction UTP + NH4(+) + ATP = CTP + ADP + phosphate + 2 H(+). It participates in pyrimidine metabolism; CTP biosynthesis via de novo pathway; CTP from UDP: step 2/2. Its activity is regulated as follows. Allosterically activated by GTP, when glutamine is the substrate; GTP has no effect on the reaction when ammonia is the substrate. The allosteric effector GTP functions by stabilizing the protein conformation that binds the tetrahedral intermediate(s) formed during glutamine hydrolysis. Inhibited by the product CTP, via allosteric rather than competitive inhibition. Its function is as follows. Catalyzes the ATP-dependent amination of UTP to CTP with either L-glutamine or ammonia as the source of nitrogen. Regulates intracellular CTP levels through interactions with the four ribonucleotide triphosphates. The chain is CTP synthase from Bartonella quintana (strain Toulouse) (Rochalimaea quintana).